A 239-amino-acid chain; its full sequence is Fumarate reductase iron-sulfur subunit (239 aa).

In terms of domain architecture, 2Fe-2S ferredoxin-type spans 5–95; sequence LTIRVFKYDP…DGVITLLPLP (91 aa). Positions 57, 62, 65, and 77 each coordinate [2Fe-2S] cluster. Residues 142 to 171 form the 4Fe-4S ferredoxin-type domain; it reads AQEVFELDRCIECGCCIAACGTKIMREDFV. [4Fe-4S] cluster-binding residues include Cys151, Cys154, and Cys157. 3 residues coordinate [3Fe-4S] cluster: Cys161, Cys208, and Cys214. Cys218 is a [4Fe-4S] cluster binding site.

The protein belongs to the succinate dehydrogenase/fumarate reductase iron-sulfur protein family. Part of an enzyme complex containing three subunits: a flavoprotein (frdA), an iron-sulfur protein (frdB), and diheme cytochrome b (frdC). [2Fe-2S] cluster serves as cofactor. [3Fe-4S] cluster is required as a cofactor. Requires [4Fe-4S] cluster as cofactor.

It localises to the cell inner membrane. The enzyme catalyses a menaquinone + succinate = a menaquinol + fumarate. In terms of biological role, the fumarate reductase enzyme complex is required for fumarate respiration using formate or sulfide as electron donor. This Wolinella succinogenes (strain ATCC 29543 / DSM 1740 / CCUG 13145 / JCM 31913 / LMG 7466 / NCTC 11488 / FDC 602W) (Vibrio succinogenes) protein is Fumarate reductase iron-sulfur subunit (frdB).